Here is a 71-residue protein sequence, read N- to C-terminus: Pseudonajatoxin b (71 aa).

5 cysteine pairs are disulfide-bonded: cysteine 3–cysteine 21, cysteine 14–cysteine 42, cysteine 27–cysteine 31, cysteine 46–cysteine 58, and cysteine 59–cysteine 64.

It belongs to the three-finger toxin family. Long-chain subfamily. Type II alpha-neurotoxin sub-subfamily. Expressed by the venom gland.

The protein localises to the secreted. Functionally, binds with high affinity to muscular (alpha-1/CHRNA1) and neuronal (alpha-7/CHRNA7) nicotinic acetylcholine receptor (nAChR) and inhibits acetylcholine from binding to the receptor, thereby impairing neuromuscular and neuronal transmission. The chain is Pseudonajatoxin b from Pseudonaja textilis (Eastern brown snake).